The following is a 95-amino-acid chain: Large ribosomal subunit protein uL23 (95 aa).

Belongs to the universal ribosomal protein uL23 family. In terms of assembly, part of the 50S ribosomal subunit. Contacts protein L29, and trigger factor when it is bound to the ribosome.

Its function is as follows. One of the early assembly proteins it binds 23S rRNA. One of the proteins that surrounds the polypeptide exit tunnel on the outside of the ribosome. Forms the main docking site for trigger factor binding to the ribosome. The chain is Large ribosomal subunit protein uL23 from Shouchella clausii (strain KSM-K16) (Alkalihalobacillus clausii).